Here is a 178-residue protein sequence, read N- to C-terminus: Ribosome maturation factor RimP (178 aa).

The protein belongs to the RimP family.

It localises to the cytoplasm. Required for maturation of 30S ribosomal subunits. The chain is Ribosome maturation factor RimP from Streptococcus pyogenes serotype M5 (strain Manfredo).